The primary structure comprises 632 residues: Extracellular metalloproteinase 2 (632 aa).

Positions 1–19 (MHGLLLAGLAAALPLGVAG) are cleaved as a signal peptide. Residues 20 to 244 (LPARQQSGLS…VHNVVDYVAS (225 aa)) constitute a propeptide that is removed on maturation. Asn270 carries N-linked (GlcNAc...) asparagine glycosylation. Zn(2+) is bound at residue His429. Residue Glu430 is part of the active site. Position 433 (His433) interacts with Zn(2+).

Belongs to the peptidase M36 family. Requires Zn(2+) as cofactor.

It is found in the secreted. In terms of biological role, secreted metalloproteinase that allows assimilation of proteinaceous substrates and probably acts as a virulence factor. The protein is Extracellular metalloproteinase 2 (MEP2) of Arthroderma gypseum (strain ATCC MYA-4604 / CBS 118893) (Microsporum gypseum).